Here is a 670-residue protein sequence, read N- to C-terminus: Sodium/glucose cotransporter 2 (670 aa).

The Extracellular segment spans residues 1–20 (MEGHVEEGSELGEQKVLIDN). The chain crosses the membrane as a helical span at residues 21–42 (PADILVIAAYFLLVIGVGLWSM). Residues 43-61 (FRTNRGTVGGYFLAGRSMV) lie on the Cytoplasmic side of the membrane. A helical membrane pass occupies residues 62–83 (WWPVGASLFASNIGSGHFVGLA). Na(+) is bound by residues Ala71 and Ile74. The Extracellular segment spans residues 84-91 (GTGAASGL). A helical transmembrane segment spans residues 92–112 (AVAGFEWNALFVVLLLGWLFV). Over 113–134 (PVYLTAGVITMPQYLRKRFGGR) the chain is Cytoplasmic. The chain crosses the membrane as a helical span at residues 135–164 (RIRLYLSVLSLFLYIFTKISVDMFSGAVFI). Residues 165-171 (QQALGWN) lie on the Extracellular side of the membrane. 2 consecutive transmembrane segments (helical) span residues 172-193 (IYASVIALLGITMIYTVTGGLA) and 194-215 (ALMYTDTVQTFVILAGAFILTG). At 216-273 (YAFHEVGGYSGLFDKYLGAVTSLTVSKDPAVGNISSTCYQPRPDSYHLLRDPVTGGLP) the chain is on the extracellular side. Asn248 is a glycosylation site (N-linked (GlcNAc...) asparagine). 4 cysteine pairs are disulfide-bonded: Cys253-Cys509, Cys343-Cys349, Cys353-Cys359, and Cys515-Cys520. A helical membrane pass occupies residues 274-293 (WPALLLGLTIVSGWHWCSDQ). Residues 294–307 (VIVQRCLAGKNLTH) lie on the Cytoplasmic side of the membrane. Residues 308–329 (IKAGCILCGYLKLMPMFLMVMP) traverse the membrane as a helical segment. The Extracellular segment spans residues 330–373 (GMISRILYPDEVACVVPEVCKRVCGTEVGCSNIAYPRLVVKLMP). The helical transmembrane segment at 374-404 (NGLRGLMLAVMLAALMSSLASIFNSSSTLFT) threads the bilayer. Ala387, Ser390, and Ser391 together coordinate Na(+). Residues 405 to 422 (MDIYTRLRPRAGDRELLL) are Cytoplasmic-facing. A helical membrane pass occupies residues 423 to 444 (VGRLWVVFIVAVSVAWLPVVQA). Topologically, residues 445–449 (AQGGQ) are extracellular. Residues 450-475 (LFDYIQSVSSYLAPPVSAVFVLALFV) form a helical membrane-spanning segment. At 476–480 (PRVNE) the chain is on the cytoplasmic side. The helical transmembrane segment at 481–503 (KGAFWGLIGGLLMGLARLIPEFF) threads the bilayer. Residues 504–521 (FGTGSCVRPSACPAIFCR) lie on the Extracellular side of the membrane. A helical membrane pass occupies residues 522 to 545 (VHYLYFAIILFFCSGFLTLAISRC). Residues 546–649 (TAPIPQKHLH…DISEDPSWAR (104 aa)) lie on the Cytoplasmic side of the membrane. Residues 650–668 (VVNLNALLMMTVAVFLWGF) form a helical membrane-spanning segment. Topologically, residues 669–670 (YA) are extracellular.

The protein belongs to the sodium:solute symporter (SSF) (TC 2.A.21) family. Forms a heterodimer (via TM13) with PDZK1IP1 (via N-terminal transmembrane helix); this interaction enhances SLC5A2 transporter activity. Post-translationally, glycosylated at a single site. Kidney, in proximal tubule S1 segments.

The protein localises to the apical cell membrane. It carries out the reaction D-glucose(out) + Na(+)(out) = D-glucose(in) + Na(+)(in). With respect to regulation, enhanced by the interaction with PDZK1IP1/MAP17. Functionally, electrogenic Na(+)-coupled sugar symporter that actively transports D-glucose at the plasma membrane, with a Na(+) to sugar coupling ratio of 1:1. Transporter activity is driven by a transmembrane Na(+) electrochemical gradient set by the Na(+)/K(+) pump. Unlike SLC5A1/SGLT1, requires the auxiliary protein PDZK1IP1/MAP17 for full transporter activity. Has a primary role in D-glucose reabsorption from glomerular filtrate across the brush border of the early proximal tubules of the kidney. The protein is Sodium/glucose cotransporter 2 (Slc5a2) of Rattus norvegicus (Rat).